The sequence spans 182 residues: Early nodulin-like protein 14 (182 aa).

The N-terminal stretch at 1 to 28 is a signal peptide; it reads MFLSASMASSSLHVAIFSLIFLFSLAAA. The Phytocyanin domain occupies 29-133; it reads NEVTVGGKSG…GQKLSLVVIS (105 aa). Residues Cys87 and Cys121 are joined by a disulfide bond. Asn88 and Asn95 each carry an N-linked (GlcNAc...) asparagine glycan. Residue Ser160 is the site of GPI-anchor amidated serine attachment. A propeptide spans 161 to 182 (removed in mature form); the sequence is GSVRLGGCYVVLGLVLGLCAWF.

Belongs to the early nodulin-like (ENODL) family. Interacts strongly and specifically with the extracellular domain of FERONIA at the synergid cell surface. As to expression, mostly expressed in seedlings and flowers, and, to a lower extent, in roots, stems and seeds, but barely in leaves.

The protein resides in the cell membrane. In terms of biological role, may act as a carbohydrate transporter. Required, together with ENODL11, ENODL12, ENODL13, ENODL14 and ENODL15, for male-female communication and pollen tube reception and burst at the synergid cell surface of the female gametophyte. The chain is Early nodulin-like protein 14 from Arabidopsis thaliana (Mouse-ear cress).